The primary structure comprises 506 residues: AMP phosphorylase (506 aa).

AMP is bound by residues glycine 168, 194-199 (SRAITG), and threonine 203. Aspartate 256 acts as the Proton donor in catalysis. Positions 264 and 288 each coordinate AMP.

It belongs to the thymidine/pyrimidine-nucleoside phosphorylase family. Type 2 subfamily.

The catalysed reaction is AMP + phosphate = alpha-D-ribose 1,5-bisphosphate + adenine. It catalyses the reaction CMP + phosphate = cytosine + alpha-D-ribose 1,5-bisphosphate. It carries out the reaction UMP + phosphate = alpha-D-ribose 1,5-bisphosphate + uracil. In terms of biological role, catalyzes the conversion of AMP and phosphate to adenine and ribose 1,5-bisphosphate (R15P). Exhibits phosphorylase activity toward CMP and UMP in addition to AMP. Functions in an archaeal AMP degradation pathway, together with R15P isomerase and RubisCO. The protein is AMP phosphorylase of Methanococcoides burtonii (strain DSM 6242 / NBRC 107633 / OCM 468 / ACE-M).